The following is a 101-amino-acid chain: Urease subunit beta (101 aa).

It belongs to the urease beta subunit family. Heterotrimer of UreA (gamma), UreB (beta) and UreC (alpha) subunits. Three heterotrimers associate to form the active enzyme.

The protein resides in the cytoplasm. The catalysed reaction is urea + 2 H2O + H(+) = hydrogencarbonate + 2 NH4(+). Its pathway is nitrogen metabolism; urea degradation; CO(2) and NH(3) from urea (urease route): step 1/1. This Albidiferax ferrireducens (strain ATCC BAA-621 / DSM 15236 / T118) (Rhodoferax ferrireducens) protein is Urease subunit beta.